Reading from the N-terminus, the 235-residue chain is Small ribosomal subunit protein uS3 (235 aa).

The KH type-2 domain occupies 39-107 (IREILHKELK…DVVINIVEIR (69 aa)). Residues 215-235 (QDKRMAEGDGGGSSRPRRDAA) form a disordered region.

This sequence belongs to the universal ribosomal protein uS3 family. In terms of assembly, part of the 30S ribosomal subunit. Forms a tight complex with proteins S10 and S14.

Binds the lower part of the 30S subunit head. Binds mRNA in the 70S ribosome, positioning it for translation. This Rhodopseudomonas palustris (strain ATCC BAA-98 / CGA009) protein is Small ribosomal subunit protein uS3.